Reading from the N-terminus, the 580-residue chain is MKVLLHCQRLRFIWLAKPAGRHFHRDSQLWAPLTLDDFEAINRCEKPLPKNFNFAADVLDQWSLKEKSGERPANPALWWVNGKGDEVKWSFQELGSLSRKAANVLTKPCGLQRGDRVAVILPRIPEWWLINVACMRTGLVFMPGTIQLTRKDILYRLQASKAKCIVASEEVAPAVDSIVSECPSLKTKLLVSPHHWDGWLNFQELLQSASEEHNCVETGSQEPMAIYFTSGTTGSPKMAQHSQGSLGIGYTLCGRYWLDLTSSDIMWNMSDTGWIKAAIGSVFSTWLRGACVFVHRMAQFDTDIFLDTLTTYPITTLCSAPTVYRMLVQKDLKRYQFKRLRHCLTGGEPLNPEVLEQWKMQTGLELYEGYGQTEVGIICANRKGEAIKPGSMGKGVVPYDVQIIDENGNILPSGKEGEIALRLKSDRPFCFFSEYVDNPEKTDATIRRNFYVTGDRGVMDDDGYFWFVGRADDVIISSGYRIGPFEVESALIEHPAVVESAVVSSPDPIRGEVVKAFIVLAAPYKCSNREKLTAELQDHVKNSTAPYKYPRKVEFVQELPKTITGKIKRNVLRDQEWGRA.

Residues 1 to 22 (MKVLLHCQRLRFIWLAKPAGRH) constitute a mitochondrion transit peptide. Residues 229-237 (TSGTTGSPK), 368-373 (EGYGQT), D455, R470, and K566 contribute to the ATP site.

This sequence belongs to the ATP-dependent AMP-binding enzyme family. It depends on Mg(2+) as a cofactor. The cofactor is Mn(2+).

It is found in the mitochondrion. It catalyses the reaction a medium-chain fatty acid + ATP + CoA = a medium-chain fatty acyl-CoA + AMP + diphosphate. It carries out the reaction hexanoate + ATP + CoA = hexanoyl-CoA + AMP + diphosphate. The catalysed reaction is octanoate + ATP + CoA = octanoyl-CoA + AMP + diphosphate. The enzyme catalyses decanoate + ATP + CoA = decanoyl-CoA + AMP + diphosphate. It catalyses the reaction dodecanoate + ATP + CoA = dodecanoyl-CoA + AMP + diphosphate. In terms of biological role, catalyzes the activation of fatty acids by CoA to produce an acyl-CoA, the first step in fatty acid metabolism. Capable of activating medium-chain fatty acids with a preference for C6-12 fatty acids. This is Acyl-coenzyme A synthetase ACSM4, mitochondrial (Acsm4) from Mus musculus (Mouse).